We begin with the raw amino-acid sequence, 449 residues long: Protein trichome birefringence-like 35 (449 aa).

A helical; Signal-anchor for type II membrane protein membrane pass occupies residues 12–29 (LPLAGLLFILVVTFMILF). Positions 185 to 187 (GDS) match the GDS motif motif. The short motif at 428–442 (DCTHWCVPGVPDVWN) is the DCXHWCLPGXXDXWN motif element.

The protein belongs to the PC-esterase family. TBL subfamily.

Its subcellular location is the membrane. In terms of biological role, may act as a bridging protein that binds pectin and other cell wall polysaccharides. Probably involved in maintaining esterification of pectins. May be involved in the specific O-acetylation of cell wall polymers. The protein is Protein trichome birefringence-like 35 (TBL35) of Arabidopsis thaliana (Mouse-ear cress).